The primary structure comprises 336 residues: Fructose-1,6-bisphosphatase class 1 (336 aa).

The Mg(2+) site is built by Glu90, Asp112, Leu114, and Asp115. Substrate is bound by residues 115–118 (DGSS), Asn207, and Lys273. Glu279 is a Mg(2+) binding site.

This sequence belongs to the FBPase class 1 family. In terms of assembly, homotetramer. Mg(2+) is required as a cofactor.

The protein localises to the cytoplasm. The catalysed reaction is beta-D-fructose 1,6-bisphosphate + H2O = beta-D-fructose 6-phosphate + phosphate. Its pathway is carbohydrate biosynthesis; gluconeogenesis. This is Fructose-1,6-bisphosphatase class 1 from Xanthomonas axonopodis pv. citri (strain 306).